The primary structure comprises 103 residues: Large ribosomal subunit protein uL24 (103 aa).

This sequence belongs to the universal ribosomal protein uL24 family. Part of the 50S ribosomal subunit.

One of two assembly initiator proteins, it binds directly to the 5'-end of the 23S rRNA, where it nucleates assembly of the 50S subunit. Functionally, one of the proteins that surrounds the polypeptide exit tunnel on the outside of the subunit. This Haemophilus influenzae (strain PittEE) protein is Large ribosomal subunit protein uL24.